Reading from the N-terminus, the 226-residue chain is AN1-type zinc finger protein 3 homolog (226 aa).

The segment at 12–44 (PSLPPRCPCGFWGSSKTMNLCSKCFADFQKKQP) adopts an A20-type zinc-finger fold. Residues C18, C20, C32, and C35 each contribute to the Zn(2+) site. Positions 42–149 (KQPDEDTAPS…DRPDNSSRSK (108 aa)) are disordered. 3 stretches are compositionally biased toward polar residues: residues 49–59 (APSTSSSQSDL), 67–92 (DNGNTSIPTPTVNPTQQLPTELNVDS), and 105–114 (AHVSLTTPSK). A compositionally biased stretch (basic and acidic residues) spans 134–146 (RLLDSGDRPDNSS). The AN1-type zinc finger occupies 150-199 (QKSRRRCFRCQIKLELVQQELGSCRCGYVFCMLHRLPEQHDCTFDHMGRG). Residues C156, C159, C173, C175, C180, H183, H189, and C191 each contribute to the Zn(2+) site.

The polypeptide is AN1-type zinc finger protein 3 homolog (zfand3) (Xenopus laevis (African clawed frog)).